The chain runs to 110 residues: Waprin-Thr1 (110 aa).

Residues 1 to 20 (MYKKGTILVLAYLLIATAVC) form the signal peptide. A WAP domain is found at 22-68 (LSYKEGHCPLRNSVSKCIPRCVSDYQCSFNEKCCPNKCGSESCVQAS). Cystine bridges form between Cys-29–Cys-55, Cys-38–Cys-59, Cys-42–Cys-54, and Cys-48–Cys-64.

This sequence belongs to the venom waprin family. Cys-rich waprin subfamily. Expressed by the venom gland.

Its subcellular location is the secreted. Functionally, antimicrobial peptides with activity against Gram-positive and Gram-negative bacteria as well as fungi. Recognizes carbohydrates in the microbial cell walls, and induces structural damage to them. Also inhibits microbial serine proteases subtilisin A and proteinase K, as well as human and porcine elastases. Carbohydrates that are recognized are LPS, mannan, peptidoglycan, and N-acetl-D-glucosamine. This Apis mellifera (Honeybee) protein is Waprin-Thr1.